The primary structure comprises 253 residues: Ubiquinone/menaquinone biosynthesis C-methyltransferase UbiE (253 aa).

S-adenosyl-L-methionine is bound by residues T76, D97, and 125 to 126 (NA).

The protein belongs to the class I-like SAM-binding methyltransferase superfamily. MenG/UbiE family.

The catalysed reaction is a 2-demethylmenaquinol + S-adenosyl-L-methionine = a menaquinol + S-adenosyl-L-homocysteine + H(+). The enzyme catalyses a 2-methoxy-6-(all-trans-polyprenyl)benzene-1,4-diol + S-adenosyl-L-methionine = a 5-methoxy-2-methyl-3-(all-trans-polyprenyl)benzene-1,4-diol + S-adenosyl-L-homocysteine + H(+). It participates in quinol/quinone metabolism; menaquinone biosynthesis; menaquinol from 1,4-dihydroxy-2-naphthoate: step 2/2. Its pathway is cofactor biosynthesis; ubiquinone biosynthesis. Its function is as follows. Methyltransferase required for the conversion of demethylmenaquinol (DMKH2) to menaquinol (MKH2) and the conversion of 2-polyprenyl-6-methoxy-1,4-benzoquinol (DDMQH2) to 2-polyprenyl-3-methyl-6-methoxy-1,4-benzoquinol (DMQH2). The sequence is that of Ubiquinone/menaquinone biosynthesis C-methyltransferase UbiE from Rhodopseudomonas palustris (strain BisB5).